The following is a 290-amino-acid chain: Acetyl-coenzyme A carboxylase carboxyl transferase subunit beta (290 aa).

Residues 28-290 (VMTKCPQCKK…GGGESGWWRN (263 aa)) form the CoA carboxyltransferase N-terminal domain. Zn(2+) contacts are provided by cysteine 32, cysteine 35, cysteine 51, and cysteine 54. The C4-type zinc-finger motif lies at 32-54 (CPQCKKIMYTKELVKNLRVCLSC).

This sequence belongs to the AccD/PCCB family. As to quaternary structure, acetyl-CoA carboxylase is a heterohexamer composed of biotin carboxyl carrier protein (AccB), biotin carboxylase (AccC) and two subunits each of ACCase subunit alpha (AccA) and ACCase subunit beta (AccD). Zn(2+) serves as cofactor.

The protein localises to the cytoplasm. The catalysed reaction is N(6)-carboxybiotinyl-L-lysyl-[protein] + acetyl-CoA = N(6)-biotinyl-L-lysyl-[protein] + malonyl-CoA. The protein operates within lipid metabolism; malonyl-CoA biosynthesis; malonyl-CoA from acetyl-CoA: step 1/1. Functionally, component of the acetyl coenzyme A carboxylase (ACC) complex. Biotin carboxylase (BC) catalyzes the carboxylation of biotin on its carrier protein (BCCP) and then the CO(2) group is transferred by the transcarboxylase to acetyl-CoA to form malonyl-CoA. The protein is Acetyl-coenzyme A carboxylase carboxyl transferase subunit beta of Geobacillus thermodenitrificans (strain NG80-2).